The sequence spans 104 residues: L-rhamnose mutarotase (104 aa).

Y18 serves as a coordination point for substrate. H22 functions as the Proton donor in the catalytic mechanism. Substrate is bound by residues Y41 and 76–77 (WW).

It belongs to the rhamnose mutarotase family. Homodimer.

It is found in the cytoplasm. The catalysed reaction is alpha-L-rhamnose = beta-L-rhamnose. The protein operates within carbohydrate metabolism; L-rhamnose metabolism. In terms of biological role, involved in the anomeric conversion of L-rhamnose. The protein is L-rhamnose mutarotase of Acidiphilium cryptum (strain JF-5).